We begin with the raw amino-acid sequence, 207 residues long: Large ribosomal subunit protein uL4 (207 aa).

The disordered stretch occupies residues H49–I78.

It belongs to the universal ribosomal protein uL4 family. In terms of assembly, part of the 50S ribosomal subunit.

Functionally, one of the primary rRNA binding proteins, this protein initially binds near the 5'-end of the 23S rRNA. It is important during the early stages of 50S assembly. It makes multiple contacts with different domains of the 23S rRNA in the assembled 50S subunit and ribosome. In terms of biological role, forms part of the polypeptide exit tunnel. In Streptococcus equi subsp. zooepidemicus (strain H70), this protein is Large ribosomal subunit protein uL4.